The primary structure comprises 361 residues: Serpentine receptor class epsilon-32 (361 aa).

The next 7 helical transmembrane spans lie at 34 to 54 (IIEL…LYVM), 66 to 86 (ILYI…LITI), 124 to 144 (LLIF…YGIL), 168 to 188 (IPIA…LSVL), 195 to 215 (FLSH…YLFI), 256 to 276 (LVFV…ALAF), and 286 to 306 (FVEN…MLTI).

The protein belongs to the nematode receptor-like protein sre family.

It is found in the membrane. This is Serpentine receptor class epsilon-32 (sre-32) from Caenorhabditis elegans.